A 504-amino-acid chain; its full sequence is Maturase K (504 aa).

This sequence belongs to the intron maturase 2 family. MatK subfamily.

It is found in the plastid. The protein resides in the chloroplast. Functionally, usually encoded in the trnK tRNA gene intron. Probably assists in splicing its own and other chloroplast group II introns. The sequence is that of Maturase K from Nepenthes distillatoria (Pitcher plant).